The primary structure comprises 256 residues: Imidazole glycerol phosphate synthase subunit HisF (256 aa).

Active-site residues include aspartate 11 and aspartate 130.

It belongs to the HisA/HisF family. Heterodimer of HisH and HisF.

The protein localises to the cytoplasm. It catalyses the reaction 5-[(5-phospho-1-deoxy-D-ribulos-1-ylimino)methylamino]-1-(5-phospho-beta-D-ribosyl)imidazole-4-carboxamide + L-glutamine = D-erythro-1-(imidazol-4-yl)glycerol 3-phosphate + 5-amino-1-(5-phospho-beta-D-ribosyl)imidazole-4-carboxamide + L-glutamate + H(+). It functions in the pathway amino-acid biosynthesis; L-histidine biosynthesis; L-histidine from 5-phospho-alpha-D-ribose 1-diphosphate: step 5/9. In terms of biological role, IGPS catalyzes the conversion of PRFAR and glutamine to IGP, AICAR and glutamate. The HisF subunit catalyzes the cyclization activity that produces IGP and AICAR from PRFAR using the ammonia provided by the HisH subunit. In Prochlorococcus marinus (strain NATL1A), this protein is Imidazole glycerol phosphate synthase subunit HisF.